The following is a 67-amino-acid chain: Large ribosomal subunit protein bL35 (67 aa).

It belongs to the bacterial ribosomal protein bL35 family.

The sequence is that of Large ribosomal subunit protein bL35 from Allorhizobium ampelinum (strain ATCC BAA-846 / DSM 112012 / S4) (Agrobacterium vitis (strain S4)).